Consider the following 459-residue polypeptide: Putrescine aminotransferase (459 aa).

Pyridoxal 5'-phosphate is bound by residues 150-151 and Gln274; that span reads GT. Lys300 is subject to N6-(pyridoxal phosphate)lysine. A pyridoxal 5'-phosphate-binding site is contributed by Thr332.

The protein belongs to the class-III pyridoxal-phosphate-dependent aminotransferase family. Putrescine aminotransferase subfamily. The cofactor is pyridoxal 5'-phosphate.

It carries out the reaction an alkane-alpha,omega-diamine + 2-oxoglutarate = an omega-aminoaldehyde + L-glutamate. It catalyses the reaction putrescine + 2-oxoglutarate = 1-pyrroline + L-glutamate + H2O. The catalysed reaction is cadaverine + 2-oxoglutarate = 5-aminopentanal + L-glutamate. It participates in amine and polyamine degradation; putrescine degradation; 4-aminobutanal from putrescine (transaminase route): step 1/1. In terms of biological role, catalyzes the aminotransferase reaction from putrescine to 2-oxoglutarate, leading to glutamate and 4-aminobutanal, which spontaneously cyclizes to form 1-pyrroline. This is the first step in one of two pathways for putrescine degradation, where putrescine is converted into 4-aminobutanoate (gamma-aminobutyrate or GABA) via 4-aminobutanal. Also functions as a cadaverine transaminase in a a L-lysine degradation pathway to succinate that proceeds via cadaverine, glutarate and L-2-hydroxyglutarate. The chain is Putrescine aminotransferase from Salmonella paratyphi B (strain ATCC BAA-1250 / SPB7).